A 117-amino-acid polypeptide reads, in one-letter code: Transcription elongation factor SPT4 (117 aa).

The residue at position 2 (Ala2) is an N-acetylalanine. Residues 2 to 40 (ALETVPKDLRHLRACLLCSLVKTIDQFEYDGCDNCDAYL) are interaction with SUPT5H. Zn(2+) is bound by residues Cys16, Cys19, Cys33, and Cys36. Residues 16-36 (CLLCSLVKTIDQFEYDGCDNC) form a C4-type zinc finger.

The protein belongs to the SPT4 family. Interacts with SUPT5H to form DSIF. DSIF interacts with the positive transcription elongation factor b complex (P-TEFb complex), which is composed of CDK9 and cyclin-T (CCNT1 or CCNT2). DSIF interacts with RNA polymerase II, and this interaction is reduced by phosphorylation of the C-terminal domain (CTD) of POLR2A by P-TEFb. DSIF also interacts with the NELF complex, which is composed of NELFA, NELFB, NELFD and NELFE, and this interaction occurs following prior binding of DSIF to RNA polymerase II. DSIF also interacts with PRMT1/HRMT1L2, TATSF1, RNGTT/CAP1A, PRMT5/SKB1, SUPT6H, and can interact with PIN1. Post-translationally, ubiquitinated by UBR5 when not assembled in the DSIF complex, leading to its degradation: UBR5 recognizes and binds a degron that is not accessible when SUPT4H1 is part of the DSIF complex.

Its subcellular location is the nucleus. Its function is as follows. Component of the DRB sensitivity-inducing factor complex (DSIF complex), which regulates mRNA processing and transcription elongation by RNA polymerase II. DSIF positively regulates mRNA capping by stimulating the mRNA guanylyltransferase activity of RNGTT/CAP1A. DSIF also acts cooperatively with the negative elongation factor complex (NELF complex) to enhance transcriptional pausing at sites proximal to the promoter. Transcriptional pausing may facilitate the assembly of an elongation competent RNA polymerase II complex. DSIF and NELF promote pausing by inhibition of the transcription elongation factor TFIIS/S-II. TFIIS/S-II binds to RNA polymerase II at transcription pause sites and stimulates the weak intrinsic nuclease activity of the enzyme. Cleavage of blocked transcripts by RNA polymerase II promotes the resumption of transcription from the new 3' terminus and may allow repeated attempts at transcription through natural pause sites. This chain is Transcription elongation factor SPT4 (SUPT4H1), found in Pongo abelii (Sumatran orangutan).